The primary structure comprises 452 residues: Probable ECA polymerase (452 aa).

Helical transmembrane passes span 6 to 26 (FSGLLVVWLLSTLFIATLTWF), 37 to 57 (VFFSLLFLLTFFFGFPLTSVL), 63 to 83 (VGVAPPEILLQALLSAACFYG), 118 to 138 (VILMGIALVSVAIFFMHNGFL), 155 to 175 (GVALKRFFYFFIPAMLVVYFL), 181 to 201 (AWLFFLVSTVAFGLLTYMIVG), 207 to 227 (IIIAFAIFLFIGIIRGWISLW), 228 to 248 (MLAAAGVLGIVGMFWLALKRY), 341 to 361 (LVVMGGALFIPLGAIVVGLII), 378 to 398 (YKAAILHSFCFGAIFNMIVLA), and 410 to 430 (VFFLVVFGASLLVAKLLFWLF).

The protein belongs to the WzyE family. In terms of assembly, probably part of a complex composed of WzxE, WzyE and WzzE.

It localises to the cell inner membrane. The protein operates within bacterial outer membrane biogenesis; enterobacterial common antigen biosynthesis. In terms of biological role, probably involved in the polymerization of enterobacterial common antigen (ECA) trisaccharide repeat units. In Salmonella typhi, this protein is Probable ECA polymerase.